The primary structure comprises 52 residues: IYVRPTNDELNYCGDFRELGQPDKKCRCDGKPCTVGRCKFARGDNDDKCISA.

The short motif at 42–44 (RGD) is the Cell attachment site element.

Belongs to the ornatin family.

It is found in the secreted. Functionally, potent inhibitor of fibrinogen interaction with platelet receptors expressed on glycoprotein IIb-IIIa complex. May prevent blood from clotting during either feeding and/or storage of ingested blood. This is Ornatin-B from Placobdella ornata (Turtle leech).